The following is a 605-amino-acid chain: Phosphoenolpyruvate carboxykinase [GTP] (605 aa).

Residues Arg79 and 218–220 (YGG) contribute to the substrate site. Mn(2+) is bound by residues Lys227 and His247. Ser269 is a substrate binding site. Residue 270 to 275 (ACGKTN) coordinates GTP. Residue Cys271 is part of the active site. Asp294 lines the Mn(2+) pocket. Over residues 364-381 (LTDWKGRDWTPQSDEKAA) the composition is skewed to basic and acidic residues. The segment at 364-385 (LTDWKGRDWTPQSDEKAAHPNS) is disordered. Substrate is bound at residue 384–386 (NSR). Residues Arg386, Arg417, and 513-516 (FGEN) contribute to the GTP site.

It belongs to the phosphoenolpyruvate carboxykinase [GTP] family. Monomer. The cofactor is Mn(2+).

The protein resides in the cytoplasm. It carries out the reaction oxaloacetate + GTP = phosphoenolpyruvate + GDP + CO2. The protein operates within carbohydrate biosynthesis; gluconeogenesis. Catalyzes the conversion of oxaloacetate (OAA) to phosphoenolpyruvate (PEP), the rate-limiting step in the metabolic pathway that produces glucose from lactate and other precursors derived from the citric acid cycle. The protein is Phosphoenolpyruvate carboxykinase [GTP] of Saccharopolyspora erythraea (strain ATCC 11635 / DSM 40517 / JCM 4748 / NBRC 13426 / NCIMB 8594 / NRRL 2338).